A 115-amino-acid chain; its full sequence is Large ribosomal subunit protein uL22c (115 aa).

It belongs to the universal ribosomal protein uL22 family. Part of the 50S ribosomal subunit.

It localises to the plastid. It is found in the chloroplast. Its function is as follows. This protein binds specifically to 23S rRNA. In terms of biological role, the globular domain of the protein is located near the polypeptide exit tunnel on the outside of the subunit, while an extended beta-hairpin is found that lines the wall of the exit tunnel in the center of the 70S ribosome. This is Large ribosomal subunit protein uL22c (rpl22) from Phaeodactylum tricornutum (strain CCAP 1055/1).